The following is a 984-amino-acid chain: Mast/stem cell growth factor receptor Kit (984 aa).

An N-terminal signal peptide occupies residues 1–21 (MEYHWILLCVSLCFTFHPGDT). At 22–514 (KPTITPAGTY…RTISHDLFSP (493 aa)) the chain is on the extracellular side. 5 Ig-like C2-type domains span residues 23–97 (PTIT…ERAS), 98–197 (IYIY…LTVR), 203–300 (PPVI…VWLD), 311–395 (PVNN…ASVN), and 398–498 (FTIF…QAFT). Intrachain disulfides connect Cys-44–Cys-87, Cys-129–Cys-178, Cys-144–Cys-175, and Cys-226–Cys-284. Asn-227, Asn-260, Asn-314, Asn-351, Asn-395, Asn-448, and Asn-476 each carry an N-linked (GlcNAc...) asparagine glycan. Cysteines 421 and 487 form a disulfide. The helical transmembrane segment at 515-535 (LLIGSVSAACILCLILIVLFY) threads the bilayer. Over 536-984 (KYMQKPKYQI…GTEPFRVQRV (449 aa)) the chain is Cytoplasmic. Tyr-558 is a binding site for Mg(2+). Phosphotyrosine; by autocatalysis is present on residues Tyr-558 and Tyr-560. Residues 579–926 (LRFGKTLGSG…LSDTTKHIYL (348 aa)) enclose the Protein kinase domain. Residues 586–593 (GSGAFGKV), Lys-613, and 661–667 (EYCCFGD) contribute to the ATP site. Phosphotyrosine; by autocatalysis occurs at positions 690 and 707. The span at 711–723 (RPSAAGKPSSSSS) shows a compositional bias: low complexity. Positions 711 to 749 (RPSAAGKPSSSSSSEKRRSLREGSPYVEEDSESEMFDED) are disordered. Positions 737–749 (VEEDSESEMFDED) are enriched in acidic residues. Asp-781 serves as the catalytic Proton acceptor. Residue Arg-785 participates in ATP binding. Positions 786 and 799 each coordinate Mg(2+). Tyr-812 and Tyr-925 each carry phosphotyrosine; by autocatalysis. A disordered region spans residues 936–963 (PRGREESSTHSMASQPFNSAGNNSPPSR). The span at 944–960 (THSMASQPFNSAGNNSP) shows a compositional bias: polar residues.

This sequence belongs to the protein kinase superfamily. Tyr protein kinase family. CSF-1/PDGF receptor subfamily. In terms of processing, ubiquitinated. Rapidly ubiquitinated after autophosphorylation induced by kitlg/scf binding, leading to internalization and degradation. Post-translationally, autophosphorylated on tyrosine residues. Phosphorylated tyrosine residues are important for interaction with specific binding partners.

It is found in the cell membrane. The enzyme catalyses L-tyrosyl-[protein] + ATP = O-phospho-L-tyrosyl-[protein] + ADP + H(+). Tyrosine-protein kinase that acts as a cell-surface receptor for the cytokine kitlg/scf and plays an essential role in the regulation of cell survival and proliferation, hematopoiesis, stem cell maintenance, gametogenesis, mast cell development, migration and function, and in melanogenesis. The protein is Mast/stem cell growth factor receptor Kit (kit) of Takifugu rubripes (Japanese pufferfish).